The following is a 93-amino-acid chain: Alpha-defensin 24 (93 aa).

The N-terminal stretch at 1–19 is a signal peptide; the sequence is MKTLILLSALVLLAFQVQA. The propeptide occupies 20–58; sequence DPIQNTDEETKTEEQPGEEDQAVSVSFGDPEGASLQEES. The segment at 23 to 54 is disordered; it reads QNTDEETKTEEQPGEEDQAVSVSFGDPEGASL. Disulfide bonds link cysteine 64–cysteine 92, cysteine 66–cysteine 81, and cysteine 71–cysteine 91.

It belongs to the alpha-defensin family.

It is found in the secreted. Its function is as follows. May have microbicidal activities. This chain is Alpha-defensin 24 (Defa24), found in Mus musculus (Mouse).